The following is a 197-amino-acid chain: Elongation factor Ts (197 aa).

Residues 81-84 are involved in Mg(2+) ion dislocation from EF-Tu; the sequence is TDFV.

This sequence belongs to the EF-Ts family.

It is found in the cytoplasm. In terms of biological role, associates with the EF-Tu.GDP complex and induces the exchange of GDP to GTP. It remains bound to the aminoacyl-tRNA.EF-Tu.GTP complex up to the GTP hydrolysis stage on the ribosome. This Fervidobacterium nodosum (strain ATCC 35602 / DSM 5306 / Rt17-B1) protein is Elongation factor Ts.